A 478-amino-acid chain; its full sequence is Transcript termination protein A18 (478 aa).

One can recognise a Helicase ATP-binding domain in the interval 98-254; it reads KLSTHRPMYM…NDVVNVLKVS (157 aa). An ATP-binding site is contributed by 111–118; the sequence is LSCGFGKT. Residues 204-207 carry the DESH box motif; the sequence is DESH. Residues 302-468 enclose the Helicase C-terminal domain; the sequence is PRNNLIVETV…GIEGTKEEPV (167 aa).

The protein belongs to the helicase family. Poxviruses subfamily. In terms of assembly, interacts with G2. Might be part of a transcription complex composed at least of G2, A18, and H5.

It localises to the virion. Its function is as follows. DNA helicase which seems to act as a postreplicative transcription termination factor. Involved in ATP-dependent release of nascent RNA. Forms a stable complex with single-stranded DNA, and to a lesser extent RNA. In Rabbit fibroma virus (strain Kasza) (RFV), this protein is Transcript termination protein A18.